A 750-amino-acid chain; its full sequence is Photosystem I P700 chlorophyll a apoprotein A1 (750 aa).

The next 8 helical transmembrane spans lie at 70-93, 156-179, 195-219, 291-309, 346-369, 385-411, 433-455, and 531-549; these read VFSAHFGQLSIIFLWLSGMYFHGA, LYCTAIGALVFAALMLFAGWFHYH, LNHHLAGLLGLGSLSWAGHQVHVSL, IAHHHLAIAILFLIAGHMY, WHAQLSLNLAMLGSLTIVVAHHMY, LSLFTHHMWIGGFLIVGAAAHAAIFMV, AIISHLNWACIFLGFHSFGLYIH, and FLVHHIHAFTIHVTVLILL. 2 residues coordinate [4Fe-4S] cluster: cysteine 573 and cysteine 582. The next 2 membrane-spanning stretches (helical) occupy residues 589 to 610 and 664 to 686; these read HVFLGLFWMYNAISVVIFHFSW and LSAYGLFFLGAHFVWAFSLMFLF. Histidine 675 is a binding site for chlorophyll a'. Positions 683 and 691 each coordinate chlorophyll a. Phylloquinone is bound at residue tryptophan 692. The helical transmembrane segment at 724–744 threads the bilayer; the sequence is AVGVTHYLLGGIATTWAFFLA.

This sequence belongs to the PsaA/PsaB family. In terms of assembly, the PsaA/B heterodimer binds the P700 chlorophyll special pair and subsequent electron acceptors. PSI consists of a core antenna complex that captures photons, and an electron transfer chain that converts photonic excitation into a charge separation. The eukaryotic PSI reaction center is composed of at least 11 subunits. Requires P700 is a chlorophyll a/chlorophyll a' dimer, A0 is one or more chlorophyll a, A1 is one or both phylloquinones and FX is a shared 4Fe-4S iron-sulfur center. as cofactor.

It is found in the plastid. It localises to the chloroplast thylakoid membrane. It carries out the reaction reduced [plastocyanin] + hnu + oxidized [2Fe-2S]-[ferredoxin] = oxidized [plastocyanin] + reduced [2Fe-2S]-[ferredoxin]. Functionally, psaA and PsaB bind P700, the primary electron donor of photosystem I (PSI), as well as the electron acceptors A0, A1 and FX. PSI is a plastocyanin-ferredoxin oxidoreductase, converting photonic excitation into a charge separation, which transfers an electron from the donor P700 chlorophyll pair to the spectroscopically characterized acceptors A0, A1, FX, FA and FB in turn. Oxidized P700 is reduced on the lumenal side of the thylakoid membrane by plastocyanin. This chain is Photosystem I P700 chlorophyll a apoprotein A1, found in Nicotiana sylvestris (Wood tobacco).